The chain runs to 301 residues: 4-hydroxy-tetrahydrodipicolinate synthase (301 aa).

Position 57 (threonine 57) interacts with pyruvate. The active-site Proton donor/acceptor is the tyrosine 143. The Schiff-base intermediate with substrate role is filled by lysine 171. Pyruvate is bound at residue isoleucine 211.

The protein belongs to the DapA family. In terms of assembly, homotetramer; dimer of dimers.

It localises to the cytoplasm. The enzyme catalyses L-aspartate 4-semialdehyde + pyruvate = (2S,4S)-4-hydroxy-2,3,4,5-tetrahydrodipicolinate + H2O + H(+). It functions in the pathway amino-acid biosynthesis; L-lysine biosynthesis via DAP pathway; (S)-tetrahydrodipicolinate from L-aspartate: step 3/4. Functionally, catalyzes the condensation of (S)-aspartate-beta-semialdehyde [(S)-ASA] and pyruvate to 4-hydroxy-tetrahydrodipicolinate (HTPA). This Bifidobacterium longum (strain DJO10A) protein is 4-hydroxy-tetrahydrodipicolinate synthase.